We begin with the raw amino-acid sequence, 107 residues long: uncharacterized protein (107 aa).

Its subcellular location is the mitochondrion. This is an uncharacterized protein from Arabidopsis thaliana (Mouse-ear cress).